The following is a 152-amino-acid chain: UPF0266 membrane protein YobD (152 aa).

3 helical membrane passes run leucine 6–methionine 26, valine 45–histidine 65, and alanine 67–isoleucine 87.

Belongs to the UPF0266 family.

The protein resides in the cell inner membrane. In Salmonella arizonae (strain ATCC BAA-731 / CDC346-86 / RSK2980), this protein is UPF0266 membrane protein YobD.